The following is a 448-amino-acid chain: Chromosomal replication initiator protein DnaA 1 (448 aa).

The interval 1–76 (MLTSETQNVW…FLPVDMSGEP (76 aa)) is domain I, interacts with DnaA modulators. The tract at residues 76 to 111 (PAIRFIIAPPQKKIIPPNHFSISSSQKEEQSPNSDV) is domain II. Residues 112-328 (KLNNNYRFEN…GAINRLSAHC (217 aa)) form a domain III, AAA+ region region. ATP is bound by residues Gly-156, Gly-158, Lys-159, and Thr-160. The interval 329–448 (RLLDLNITEE…IGMVRRNIES (120 aa)) is domain IV, binds dsDNA.

This sequence belongs to the DnaA family. In terms of assembly, oligomerizes as a right-handed, spiral filament on DNA at oriC.

The protein resides in the cytoplasm. In terms of biological role, plays an essential role in the initiation and regulation of chromosomal replication. ATP-DnaA binds to the origin of replication (oriC) to initiate formation of the DNA replication initiation complex once per cell cycle. Binds the DnaA box (a 9 base pair repeat at the origin) and separates the double-stranded (ds)DNA. Forms a right-handed helical filament on oriC DNA; dsDNA binds to the exterior of the filament while single-stranded (ss)DNA is stabiized in the filament's interior. The ATP-DnaA-oriC complex binds and stabilizes one strand of the AT-rich DNA unwinding element (DUE), permitting loading of DNA polymerase. After initiation quickly degrades to an ADP-DnaA complex that is not apt for DNA replication. Binds acidic phospholipids. This chain is Chromosomal replication initiator protein DnaA 1, found in Protochlamydia amoebophila (strain UWE25).